We begin with the raw amino-acid sequence, 290 residues long: 7-methylguanosine phosphate-specific 5'-nucleotidase B (290 aa).

Asp-39 serves as the catalytic Nucleophile. Asp-39 and Asp-41 together coordinate Mg(2+). The active-site Proton donor is the Asp-41. CMP is bound at residue Glu-86. Residue Glu-86 coordinates N(7)-methyl-GMP. Substrate contacts are provided by residues 154 to 155 (SA) and Lys-203. A Mg(2+)-binding site is contributed by Asp-228.

Belongs to the pyrimidine 5'-nucleotidase family. As to quaternary structure, monomer.

It is found in the cytoplasm. The enzyme catalyses N(7)-methyl-GMP + H2O = N(7)-methylguanosine + phosphate. It catalyses the reaction CMP + H2O = cytidine + phosphate. It carries out the reaction a ribonucleoside 5'-phosphate + H2O = a ribonucleoside + phosphate. Its function is as follows. Specifically hydrolyzes 7-methylguanosine monophosphate (m(7)GMP) to 7-methylguanosine and inorganic phosphate. The specific activity for m(7)GMP may protect cells against undesired salvage of m(7)GMP and its incorporation into nucleic acids. Also has weak activity for CMP. UMP and purine nucleotides are poor substrates. The chain is 7-methylguanosine phosphate-specific 5'-nucleotidase B (Nt5c3b-b) from Xenopus laevis (African clawed frog).